We begin with the raw amino-acid sequence, 351 residues long: N-acetyl-gamma-glutamyl-phosphate reductase (351 aa).

C154 is an active-site residue.

It belongs to the NAGSA dehydrogenase family. Type 1 subfamily.

It localises to the cytoplasm. The catalysed reaction is N-acetyl-L-glutamate 5-semialdehyde + phosphate + NADP(+) = N-acetyl-L-glutamyl 5-phosphate + NADPH + H(+). Its pathway is amino-acid biosynthesis; L-arginine biosynthesis; N(2)-acetyl-L-ornithine from L-glutamate: step 3/4. Catalyzes the NADPH-dependent reduction of N-acetyl-5-glutamyl phosphate to yield N-acetyl-L-glutamate 5-semialdehyde. The polypeptide is N-acetyl-gamma-glutamyl-phosphate reductase (Prochlorococcus marinus subsp. pastoris (strain CCMP1986 / NIES-2087 / MED4)).